The following is a 700-amino-acid chain: Non-hemolytic phospholipase C (700 aa).

The tat-type signal signal peptide spans 1 to 34; sequence MTNQNRRDFLRLAAGTAGAAALQLFPPVIREALA.

It belongs to the bacterial phospholipase C family. Predicted to be exported by the Tat system. The position of the signal peptide cleavage has not been experimentally proven.

The enzyme catalyses a 1,2-diacyl-sn-glycero-3-phosphocholine + H2O = phosphocholine + a 1,2-diacyl-sn-glycerol + H(+). Functionally, hydrolyzes phosphatidylserine as well as phosphatidylcholine. This chain is Non-hemolytic phospholipase C (plcN), found in Burkholderia pseudomallei (strain K96243).